Here is a 189-residue protein sequence, read N- to C-terminus: uncharacterized protein (189 aa).

4 helical membrane passes run isoleucine 35–lysine 55, glycine 97–phenylalanine 117, tryptophan 123–threonine 143, and glycine 144–isoleucine 164.

The protein resides in the cell membrane. This is an uncharacterized protein from Bacillus subtilis (strain 168).